The primary structure comprises 378 residues: Heme chaperone HemW (378 aa).

A Radical SAM core domain is found at 1–237 (MVKLPPLSLY…LTAAGYQQYE (237 aa)). Y10 contacts S-adenosyl-L-methionine. [4Fe-4S] cluster-binding residues include C16, C20, and C23. S-adenosyl-L-methionine-binding positions include G66, 67–68 (GT), E99, Q126, R138, and D163.

Belongs to the anaerobic coproporphyrinogen-III oxidase family. HemW subfamily. As to quaternary structure, binding of the [4Fe-4S] cofactor promotes dimerization. The cofactor is [4Fe-4S] cluster.

It localises to the cytoplasm. In terms of biological role, probably acts as a heme chaperone, transferring heme to the NarI subunit of the respiratory enzyme nitrate reductase; transfer may be stimulated by NADH. Binds one molecule of heme per monomer, possibly covalently. Heme binding is not affected by either [4Fe-4S] or S-adenosyl-L-methionine (SAM)-binding. Does not have coproporphyrinogen III dehydrogenase activity in vitro. Binds 1 [4Fe-4S] cluster. The cluster is coordinated with 3 cysteines and an exchangeable S-adenosyl-L-methionine. The polypeptide is Heme chaperone HemW (Escherichia coli (strain K12)).